Reading from the N-terminus, the 786-residue chain is Pentatricopeptide repeat-containing protein At2g22070 (786 aa).

PPR repeat units lie at residues 48–78 (SVYL…MPLR), 79–109 (TAFS…LPQR), 110–144 (DSVS…GIEP), 145–179 (TQFT…GLRG), 180–214 (NVSV…DISS), 215–241 (WNAM…MAER), 242–276 (DIVT…SLLS), 278–312 (DRFT…GFDI), 313–347 (SGIV…DLKI), 350–376 (FTAL…LKDR), 377–411 (DVVA…GQRP), 412–446 (NSYT…GEIY), 447–477 (SVSV…IRCE), 479–513 (DTVS…GLRP), 514–548 (DHIT…DKII), and 550–580 (TLSH…MPIE). Positions 585–660 (TWGSLLSACR…EQGFSWIEVK (76 aa)) are type E motif. The interval 661–691 (HKVHVFGVEDGTHPEKNEIYMTMKKIWDEIK) is type E(+) motif. The type DYW motif stretch occupies residues 692-786 (KMGYVPDTAS…DGFCSCRDYW (95 aa)).

This sequence belongs to the PPR family. PCMP-H subfamily.

This chain is Pentatricopeptide repeat-containing protein At2g22070 (PCMP-H41), found in Arabidopsis thaliana (Mouse-ear cress).